We begin with the raw amino-acid sequence, 257 residues long: Hydroxyacylglutathione hydrolase (257 aa).

7 residues coordinate Zn(2+): H54, H56, D58, H59, H113, D137, and H175.

Belongs to the metallo-beta-lactamase superfamily. Glyoxalase II family. As to quaternary structure, monomer. The cofactor is Zn(2+).

It catalyses the reaction an S-(2-hydroxyacyl)glutathione + H2O = a 2-hydroxy carboxylate + glutathione + H(+). It participates in secondary metabolite metabolism; methylglyoxal degradation; (R)-lactate from methylglyoxal: step 2/2. In terms of biological role, thiolesterase that catalyzes the hydrolysis of S-D-lactoyl-glutathione to form glutathione and D-lactic acid. This is Hydroxyacylglutathione hydrolase from Trichormus variabilis (strain ATCC 29413 / PCC 7937) (Anabaena variabilis).